We begin with the raw amino-acid sequence, 134 residues long: MWSDPIADMLTRIRNANMVFKEYTDIPASNLKKKICEILKREGFIADYKYIEDGKQGILRVYLKYKGGRKNRERVIHGIVRVSHSGRRIYVDKDHIPKVKNGLGIAILTTSKGVLTDKEARQLGVGGEVIAYVW.

It belongs to the universal ribosomal protein uS8 family. As to quaternary structure, part of the 30S ribosomal subunit. Contacts proteins S5 and S12.

One of the primary rRNA binding proteins, it binds directly to 16S rRNA central domain where it helps coordinate assembly of the platform of the 30S subunit. This chain is Small ribosomal subunit protein uS8, found in Thermotoga sp. (strain RQ2).